A 149-amino-acid chain; its full sequence is Calmodulin (149 aa).

N-acetylalanine is present on Ala2. 4 EF-hand domains span residues 8 to 43 (EQIA…LGQN), 44 to 79 (PTEA…KMKD), 81 to 116 (DSEE…LGEK), and 117 to 149 (LTDE…MMAK). The Ca(2+) site is built by Asp21, Asp23, Asp25, Cys27, Glu32, Asp57, Asp59, Asn61, Thr63, Glu68, Asp94, Asp96, Asn98, and Glu105. N6,N6,N6-trimethyllysine is present on Lys116. Residues Asp130, Asp132, Asp134, Gln136, and Glu141 each contribute to the Ca(2+) site.

This sequence belongs to the calmodulin family.

In terms of biological role, calmodulin mediates the control of a large number of enzymes, ion channels and other proteins by Ca(2+). Among the enzymes to be stimulated by the calmodulin-Ca(2+) complex are a number of protein kinases and phosphatases. The chain is Calmodulin (CALM1) from Zea mays (Maize).